A 291-amino-acid chain; its full sequence is Formamidopyrimidine-DNA glycosylase (291 aa).

Pro-2 acts as the Schiff-base intermediate with DNA in catalysis. Glu-3 acts as the Proton donor in catalysis. Lys-60 serves as the catalytic Proton donor; for beta-elimination activity. DNA-binding residues include His-97, Arg-116, and Arg-161. Residues Trp-246–Thr-280 form an FPG-type zinc finger. Catalysis depends on Arg-270, which acts as the Proton donor; for delta-elimination activity.

This sequence belongs to the FPG family. Monomer. The cofactor is Zn(2+).

The enzyme catalyses Hydrolysis of DNA containing ring-opened 7-methylguanine residues, releasing 2,6-diamino-4-hydroxy-5-(N-methyl)formamidopyrimidine.. It catalyses the reaction 2'-deoxyribonucleotide-(2'-deoxyribose 5'-phosphate)-2'-deoxyribonucleotide-DNA = a 3'-end 2'-deoxyribonucleotide-(2,3-dehydro-2,3-deoxyribose 5'-phosphate)-DNA + a 5'-end 5'-phospho-2'-deoxyribonucleoside-DNA + H(+). In terms of biological role, involved in base excision repair of DNA damaged by oxidation or by mutagenic agents. Acts as a DNA glycosylase that recognizes and removes damaged bases. Has a preference for oxidized purines, such as 7,8-dihydro-8-oxoguanine (8-oxoG). Has AP (apurinic/apyrimidinic) lyase activity and introduces nicks in the DNA strand. Cleaves the DNA backbone by beta-delta elimination to generate a single-strand break at the site of the removed base with both 3'- and 5'-phosphates. The chain is Formamidopyrimidine-DNA glycosylase from Nostoc punctiforme (strain ATCC 29133 / PCC 73102).